Here is a 401-residue protein sequence, read N- to C-terminus: Adenosine 3'-phospho 5'-phosphosulfate transporter 2 (401 aa).

N-linked (GlcNAc...) asparagine glycosylation is found at Asn-12 and Asn-71. Helical transmembrane passes span 78–98, 111–131, 147–167, 170–190, 200–220, and 223–243; these read LTQFFICVAGVFVFYLIYGYL, YGWYLTLVQFAFYSIFGLIEL, MIIAFLTVGTMGLSNTSLGYL, PTQVIFKCCKLIPVMLGGVFI, VSAAICMSLGLIWFTLADSTI, and NFNLTGVVLISLALCADAVIG. The N-linked (GlcNAc...) asparagine glycan is linked to Asn-254. 4 helical membrane-spanning segments follow: residues 267–287, 298–317, 324–346, and 349–369; these read IGFVYILLGLTCTSGLGPAVT, GYAFLFSLTGYFGISFVLAL, LIAVTVTTGRKAMTIVLSFIFFA, and FTFQYVWSGLLVFLGIFLNVY.

Belongs to the nucleotide-sugar transporter family. SLC35B subfamily.

The protein resides in the golgi apparatus membrane. It carries out the reaction 3'-phosphoadenylyl sulfate(in) + adenosine 3',5'-bisphosphate(out) = 3'-phosphoadenylyl sulfate(out) + adenosine 3',5'-bisphosphate(in). Functionally, probably functions as a 3'-phosphoadenylyl sulfate:adenosine 3',5'-bisphosphate antiporter at the Golgi membranes. Mediates the transport from the cytosol into the lumen of the Golgi of 3'-phosphoadenylyl sulfate/adenosine 3'-phospho 5'-phosphosulfate (PAPS), a universal sulfuryl donor for sulfation events that take place in that compartment. The sequence is that of Adenosine 3'-phospho 5'-phosphosulfate transporter 2 from Pongo abelii (Sumatran orangutan).